A 253-amino-acid chain; its full sequence is MAQVAIITASDSGIGKECALLLAQQGFDIGITWHSDEEGAKDTAREVVSHGVRAEIVQLDLGNLPEGALALEKLIQRLGRIDVLVNNAGAMTKAPFLDMAFDEWRKIFTVDVDGAFLCSQIAARQMVKQGQGGRIINITSVHEHTPLPDASAYTAAKHALGGLTKAMALELVRHKILVNAVAPGAIATPMNGMDDSDVKPDAEPSIPLRRFGATHEIASLVVWLCSEGANYTTGQSLIVDGGFMLANPQFNPE.

6-30 (IITASDSGIGKECALLLAQQGFDIG) serves as a coordination point for NADP(+). Substrate is bound at residue S140. The Proton acceptor role is filled by Y153.

Belongs to the short-chain dehydrogenases/reductases (SDR) family.

This is an uncharacterized protein from Escherichia coli (strain K12).